The following is a 195-amino-acid chain: Orotate phosphoribosyltransferase (195 aa).

117 to 125 contacts 5-phospho-alpha-D-ribose 1-diphosphate; the sequence is EDITTTGGS. Orotate contacts are provided by Thr121 and Arg149.

Belongs to the purine/pyrimidine phosphoribosyltransferase family. PyrE subfamily. As to quaternary structure, homodimer. Requires Mg(2+) as cofactor.

It catalyses the reaction orotidine 5'-phosphate + diphosphate = orotate + 5-phospho-alpha-D-ribose 1-diphosphate. It participates in pyrimidine metabolism; UMP biosynthesis via de novo pathway; UMP from orotate: step 1/2. Catalyzes the transfer of a ribosyl phosphate group from 5-phosphoribose 1-diphosphate to orotate, leading to the formation of orotidine monophosphate (OMP). In Acidithiobacillus ferrooxidans (strain ATCC 53993 / BNL-5-31) (Leptospirillum ferrooxidans (ATCC 53993)), this protein is Orotate phosphoribosyltransferase.